The chain runs to 391 residues: Probable sugar efflux transporter (391 aa).

The next 12 helical transmembrane spans lie at 16–36 (VFVF…PVAL), 51–71 (VGLM…PLML), 82–102 (LLFL…AWNF), 110–130 (MGIA…VIRV), 138–158 (QALG…LPLG), 170–190 (TFGV…KLLP), 210–230 (PLLM…FTTY), 247–267 (ITTL…FLFS), 277–297 (FIAF…VFKN), 300–320 (WVIF…TIAL), 338–358 (IFSG…SIVI), and 361–381 (LGLE…LFWL).

It belongs to the major facilitator superfamily. SotB (TC 2.A.1.2) family.

Its subcellular location is the cell inner membrane. Functionally, involved in the efflux of sugars. The physiological role may be the reduction of the intracellular concentration of toxic sugars or sugar metabolites. The protein is Probable sugar efflux transporter of Helicobacter pylori (strain HPAG1).